The following is a 436-amino-acid chain: Mitochondrial distribution and morphology protein 12 (436 aa).

An SMP-LTD domain is found at Met1–Ile436. Positions Asp73 to Glu84 are enriched in acidic residues. Disordered regions lie at residues Asp73–Thr98, Ala184–Glu275, and Gly352–Lys380. Positions Glu85–Thr98 are enriched in basic and acidic residues. Polar residues-rich tracts occupy residues Pro190–Lys206 and Asp222–Ser243. The segment covering Ser244–Asp255 has biased composition (basic and acidic residues). The span at Pro256–Asn267 shows a compositional bias: polar residues.

The protein belongs to the MDM12 family. Component of the ER-mitochondria encounter structure (ERMES) or MDM complex, composed of mmm1, mdm10, mdm12 and mdm34. A mmm1 homodimer associates with one molecule of mdm12 on each side in a pairwise head-to-tail manner, and the SMP-LTD domains of mmm1 and mdm12 generate a continuous hydrophobic tunnel for phospholipid trafficking.

The protein resides in the mitochondrion outer membrane. It is found in the endoplasmic reticulum membrane. Functionally, component of the ERMES/MDM complex, which serves as a molecular tether to connect the endoplasmic reticulum (ER) and mitochondria. Components of this complex are involved in the control of mitochondrial shape and protein biogenesis, and function in nonvesicular lipid trafficking between the ER and mitochondria. Mdm12 is required for the interaction of the ER-resident membrane protein mmm1 and the outer mitochondrial membrane-resident beta-barrel protein mdm10. The mdm12-mmm1 subcomplex functions in the major beta-barrel assembly pathway that is responsible for biogenesis of all mitochondrial outer membrane beta-barrel proteins, and acts in a late step after the SAM complex. The mdm10-mdm12-mmm1 subcomplex further acts in the TOM40-specific pathway after the action of the mdm12-mmm1 complex. Essential for establishing and maintaining the structure of mitochondria and maintenance of mtDNA nucleoids. In Emericella nidulans (strain FGSC A4 / ATCC 38163 / CBS 112.46 / NRRL 194 / M139) (Aspergillus nidulans), this protein is Mitochondrial distribution and morphology protein 12.